Here is a 458-residue protein sequence, read N- to C-terminus: Siroheme synthase (458 aa).

The interval 1–203 (MDYLPLFFDL…GNLAAAEQLI (203 aa)) is precorrin-2 dehydrogenase /sirohydrochlorin ferrochelatase. NAD(+) is bound by residues 22 to 23 (TI) and 43 to 44 (PK). The residue at position 128 (Ser128) is a Phosphoserine. The segment at 216 to 458 (GEVYLVGAGP…RCHEKLNWYK (243 aa)) is uroporphyrinogen-III C-methyltransferase. Pro225 contacts S-adenosyl-L-methionine. Asp248 acts as the Proton acceptor in catalysis. Catalysis depends on Lys270, which acts as the Proton donor. Residues 301–303 (GGD), Ile306, 331–332 (TA), Met383, and Gly412 contribute to the S-adenosyl-L-methionine site.

This sequence in the N-terminal section; belongs to the precorrin-2 dehydrogenase / sirohydrochlorin ferrochelatase family. It in the C-terminal section; belongs to the precorrin methyltransferase family.

The catalysed reaction is uroporphyrinogen III + 2 S-adenosyl-L-methionine = precorrin-2 + 2 S-adenosyl-L-homocysteine + H(+). The enzyme catalyses precorrin-2 + NAD(+) = sirohydrochlorin + NADH + 2 H(+). It carries out the reaction siroheme + 2 H(+) = sirohydrochlorin + Fe(2+). It functions in the pathway cofactor biosynthesis; adenosylcobalamin biosynthesis; precorrin-2 from uroporphyrinogen III: step 1/1. The protein operates within cofactor biosynthesis; adenosylcobalamin biosynthesis; sirohydrochlorin from precorrin-2: step 1/1. It participates in porphyrin-containing compound metabolism; siroheme biosynthesis; precorrin-2 from uroporphyrinogen III: step 1/1. Its pathway is porphyrin-containing compound metabolism; siroheme biosynthesis; siroheme from sirohydrochlorin: step 1/1. It functions in the pathway porphyrin-containing compound metabolism; siroheme biosynthesis; sirohydrochlorin from precorrin-2: step 1/1. Functionally, multifunctional enzyme that catalyzes the SAM-dependent methylations of uroporphyrinogen III at position C-2 and C-7 to form precorrin-2 via precorrin-1. Then it catalyzes the NAD-dependent ring dehydrogenation of precorrin-2 to yield sirohydrochlorin. Finally, it catalyzes the ferrochelation of sirohydrochlorin to yield siroheme. The sequence is that of Siroheme synthase from Saccharophagus degradans (strain 2-40 / ATCC 43961 / DSM 17024).